The chain runs to 620 residues: Chaperone protein HscA homolog (620 aa).

The protein belongs to the heat shock protein 70 family.

Functionally, chaperone involved in the maturation of iron-sulfur cluster-containing proteins. Has a low intrinsic ATPase activity which is markedly stimulated by HscB. The polypeptide is Chaperone protein HscA homolog (Shewanella baltica (strain OS155 / ATCC BAA-1091)).